A 337-amino-acid polypeptide reads, in one-letter code: Inositol 2-dehydrogenase (337 aa).

It belongs to the Gfo/Idh/MocA family. In terms of assembly, homotetramer.

The catalysed reaction is myo-inositol + NAD(+) = scyllo-inosose + NADH + H(+). Involved in the oxidation of myo-inositol (MI) to 2-keto-myo-inositol (2KMI or 2-inosose). This Corynebacterium glutamicum (strain R) protein is Inositol 2-dehydrogenase.